The following is a 108-amino-acid chain: ATP synthase epsilon chain (108 aa).

This sequence belongs to the ATPase epsilon chain family. As to quaternary structure, F-type ATPases have 2 components, CF(1) - the catalytic core - and CF(0) - the membrane proton channel. CF(1) has five subunits: alpha(3), beta(3), gamma(1), delta(1), epsilon(1). CF(0) has three main subunits: a, b and c.

Its subcellular location is the cell inner membrane. Functionally, produces ATP from ADP in the presence of a proton gradient across the membrane. In Thermotoga maritima (strain ATCC 43589 / DSM 3109 / JCM 10099 / NBRC 100826 / MSB8), this protein is ATP synthase epsilon chain.